The sequence spans 78 residues: RNA-binding protein Hfq (78 aa).

In terms of domain architecture, Sm spans 10–69; sequence DPFLNALRKEHVPVSIYLVNGIKLQGHIESFDQYVVLLRNTVTQMVYKHAISTVVPARAV.

Belongs to the Hfq family. As to quaternary structure, homohexamer.

RNA chaperone that binds small regulatory RNA (sRNAs) and mRNAs to facilitate mRNA translational regulation in response to envelope stress, environmental stress and changes in metabolite concentrations. Also binds with high specificity to tRNAs. This is RNA-binding protein Hfq from Herminiimonas arsenicoxydans.